The primary structure comprises 319 residues: Lipopolysaccharide heptosyltransferase 1 (319 aa).

ADP-L-glycero-beta-D-manno-heptose is bound by residues threonine 187, threonine 188, lysine 192, glutamate 222, methionine 242, aspartate 261, threonine 262, glycine 263, and histidine 266.

This sequence belongs to the glycosyltransferase 9 family.

Its subcellular location is the cell inner membrane. The catalysed reaction is an alpha-Kdo-(2-&gt;4)-alpha-Kdo-(2-&gt;6)-lipid A + ADP-L-glycero-beta-D-manno-heptose = an L-alpha-D-Hep-(1-&gt;5)-[alpha-Kdo-(2-&gt;4)]-alpha-Kdo-(2-&gt;6)-lipid A + ADP + H(+). The enzyme catalyses alpha-Kdo-(2-&gt;4)-alpha-Kdo-(2-&gt;6)-lipid A (E. coli) + ADP-L-glycero-beta-D-manno-heptose = L-alpha-D-Hep-(1-&gt;5)-[alpha-Kdo-(2-&gt;4)]-alpha-Kdo-(2-&gt;6)-lipid A (E. coli) + ADP + H(+). It functions in the pathway bacterial outer membrane biogenesis; LPS core biosynthesis. Glycosyltransferase involved in the biosynthesis of the core oligosaccharide region of lipopolysaccharide (LPS). Catalyzes the addition of the first heptose unit to one 3-deoxy-D-manno-octulosonic acid (Kdo) residue of the Kdo2-lipid A module. The analog ADP-mannose can serve as an alternative donor in place of ADP-L-glycero-D-manno-heptose for the glycosylation of Kdo2-lipid A. Displays no activity with ADP-glucose, GDP-mannose, UDP-glucose or UDP-galactose. This Escherichia coli (strain K12) protein is Lipopolysaccharide heptosyltransferase 1.